Here is a 246-residue protein sequence, read N- to C-terminus: ATP synthase subunit a (246 aa).

Helical transmembrane passes span 34–54 (GQTMITTWVVMLLLIGLTFIG), 92–112 (WVPLIGTIFLFVLFANWLGQL), 130–150 (DINTTVALSLIALVSYIYAGL), 155–175 (FGYFKHYFESPILAAVWVLEF), and 196–216 (VVAVLILLVPILVPVPLMILF).

It belongs to the ATPase A chain family. F-type ATPases have 2 components, CF(1) - the catalytic core - and CF(0) - the membrane proton channel. CF(1) has five subunits: alpha(3), beta(3), gamma(1), delta(1), epsilon(1). CF(0) has four main subunits: a, b, b' and c.

The protein resides in the cell inner membrane. Its function is as follows. Key component of the proton channel; it plays a direct role in the translocation of protons across the membrane. The sequence is that of ATP synthase subunit a from Gloeobacter violaceus (strain ATCC 29082 / PCC 7421).